Consider the following 191-residue polypeptide: UPF0149 protein VCM66_2399 (191 aa).

The protein belongs to the UPF0149 family.

The protein is UPF0149 protein VCM66_2399 of Vibrio cholerae serotype O1 (strain M66-2).